The primary structure comprises 713 residues: Polyribonucleotide nucleotidyltransferase (713 aa).

Residues Asp-487 and Asp-493 each coordinate Mg(2+). Residues 554-613 (PRIEVMNIPVDKIREVIGSGGKVIREIVEKTGAKINIEDDGTVKIASASGKEIEAARKWI) enclose the KH domain. Residues 623-691 (GQIYEGTVVK…ERGKVRLSMK (69 aa)) form the S1 motif domain.

It belongs to the polyribonucleotide nucleotidyltransferase family. The cofactor is Mg(2+).

The protein resides in the cytoplasm. The catalysed reaction is RNA(n+1) + phosphate = RNA(n) + a ribonucleoside 5'-diphosphate. Functionally, involved in mRNA degradation. Catalyzes the phosphorolysis of single-stranded polyribonucleotides processively in the 3'- to 5'-direction. The sequence is that of Polyribonucleotide nucleotidyltransferase from Agrobacterium fabrum (strain C58 / ATCC 33970) (Agrobacterium tumefaciens (strain C58)).